The following is a 231-amino-acid chain: 7-cyano-7-deazaguanine synthase (231 aa).

Residue 8-18 (FSGGQDSTTCL) coordinates ATP. Residues cysteine 188, cysteine 197, cysteine 200, and cysteine 203 each coordinate Zn(2+).

It belongs to the QueC family. Requires Zn(2+) as cofactor.

It catalyses the reaction 7-carboxy-7-deazaguanine + NH4(+) + ATP = 7-cyano-7-deazaguanine + ADP + phosphate + H2O + H(+). Its pathway is purine metabolism; 7-cyano-7-deazaguanine biosynthesis. In terms of biological role, catalyzes the ATP-dependent conversion of 7-carboxy-7-deazaguanine (CDG) to 7-cyano-7-deazaguanine (preQ(0)). This chain is 7-cyano-7-deazaguanine synthase, found in Escherichia coli O127:H6 (strain E2348/69 / EPEC).